The following is a 107-amino-acid chain: uncharacterized protein (107 aa).

This is an uncharacterized protein from Methanocaldococcus jannaschii (strain ATCC 43067 / DSM 2661 / JAL-1 / JCM 10045 / NBRC 100440) (Methanococcus jannaschii).